A 265-amino-acid polypeptide reads, in one-letter code: Dimethylsulfide dehydrogenase subunit gamma (265 aa).

Residues 1–25 form the signal peptide; sequence MPGFRFLLAATAAFLATSPALPLSA. Heme b is bound by residues H81 and M147.

In terms of assembly, heterotrimer of alpha, beta and gamma subunits. Heme b serves as cofactor.

It is found in the periplasm. May transfer electrons to the iron-sulfur centers of DdhB. The polypeptide is Dimethylsulfide dehydrogenase subunit gamma (ddhC) (Rhodovulum sulfidophilum (Rhodobacter sulfidophilus)).